A 173-amino-acid polypeptide reads, in one-letter code: Large ribosomal subunit protein uL10 (173 aa).

This sequence belongs to the universal ribosomal protein uL10 family. In terms of assembly, part of the ribosomal stalk of the 50S ribosomal subunit. The N-terminus interacts with L11 and the large rRNA to form the base of the stalk. The C-terminus forms an elongated spine to which L12 dimers bind in a sequential fashion forming a multimeric L10(L12)X complex.

In terms of biological role, forms part of the ribosomal stalk, playing a central role in the interaction of the ribosome with GTP-bound translation factors. The sequence is that of Large ribosomal subunit protein uL10 from Chlorobaculum parvum (strain DSM 263 / NCIMB 8327) (Chlorobium vibrioforme subsp. thiosulfatophilum).